The chain runs to 865 residues: Bifunctional uridylyltransferase/uridylyl-removing enzyme (865 aa).

Positions 1–318 (MPHVDLNPLK…FPRPDSDARL (318 aa)) are uridylyltransferase. The interval 319-675 (IDDDFRNLRE…VRPTEHGEGL (357 aa)) is uridylyl-removing. The HD domain maps to 437 to 559 (VDQHTLAVVR…VGDERRLAAL (123 aa)). ACT domains are found at residues 676–762 (QVMV…RLPH) and 789–865 (RLSV…QQAA). The segment at 747 to 767 (DPHAARHAHAPRRLPHSHARR) is disordered. The span at 751 to 767 (ARHAHAPRRLPHSHARR) shows a compositional bias: basic residues.

This sequence belongs to the GlnD family. The cofactor is Mg(2+).

The catalysed reaction is [protein-PII]-L-tyrosine + UTP = [protein-PII]-uridylyl-L-tyrosine + diphosphate. The enzyme catalyses [protein-PII]-uridylyl-L-tyrosine + H2O = [protein-PII]-L-tyrosine + UMP + H(+). Uridylyltransferase (UTase) activity is inhibited by glutamine, while glutamine activates uridylyl-removing (UR) activity. In terms of biological role, modifies, by uridylylation and deuridylylation, the PII regulatory proteins (GlnB and homologs), in response to the nitrogen status of the cell that GlnD senses through the glutamine level. Under low glutamine levels, catalyzes the conversion of the PII proteins and UTP to PII-UMP and PPi, while under higher glutamine levels, GlnD hydrolyzes PII-UMP to PII and UMP (deuridylylation). Thus, controls uridylylation state and activity of the PII proteins, and plays an important role in the regulation of nitrogen assimilation and metabolism. The chain is Bifunctional uridylyltransferase/uridylyl-removing enzyme from Bordetella pertussis (strain Tohama I / ATCC BAA-589 / NCTC 13251).